Here is a 161-residue protein sequence, read N- to C-terminus: Lipoprotein signal peptidase (161 aa).

4 helical membrane-spanning segments follow: residues 8–28 (LKYFILAILIIAADLYTKYLA), 40–60 (ITSFFNLTLLYNHGAAFSLLS), 67–87 (QMIMFSTISLIAAIVLIYLII), and 91–111 (ITEKINLFSFALILGGALGNF). Residues Asp-122 and Asp-140 contribute to the active site. A helical transmembrane segment spans residues 136-156 (FNIADSAITCGVVILIAASLF).

This sequence belongs to the peptidase A8 family.

Its subcellular location is the cell inner membrane. It catalyses the reaction Release of signal peptides from bacterial membrane prolipoproteins. Hydrolyzes -Xaa-Yaa-Zaa-|-(S,diacylglyceryl)Cys-, in which Xaa is hydrophobic (preferably Leu), and Yaa (Ala or Ser) and Zaa (Gly or Ala) have small, neutral side chains.. Its pathway is protein modification; lipoprotein biosynthesis (signal peptide cleavage). Functionally, this protein specifically catalyzes the removal of signal peptides from prolipoproteins. This Francisella tularensis subsp. tularensis (strain FSC 198) protein is Lipoprotein signal peptidase.